Here is a 709-residue protein sequence, read N- to C-terminus: Ribosomal RNA large subunit methyltransferase K/L (709 aa).

In terms of domain architecture, THUMP spans Leu43 to Phe154.

Belongs to the methyltransferase superfamily. RlmKL family.

It is found in the cytoplasm. The catalysed reaction is guanosine(2445) in 23S rRNA + S-adenosyl-L-methionine = N(2)-methylguanosine(2445) in 23S rRNA + S-adenosyl-L-homocysteine + H(+). It carries out the reaction guanosine(2069) in 23S rRNA + S-adenosyl-L-methionine = N(2)-methylguanosine(2069) in 23S rRNA + S-adenosyl-L-homocysteine + H(+). In terms of biological role, specifically methylates the guanine in position 2445 (m2G2445) and the guanine in position 2069 (m7G2069) of 23S rRNA. This chain is Ribosomal RNA large subunit methyltransferase K/L, found in Shewanella baltica (strain OS155 / ATCC BAA-1091).